The primary structure comprises 64 residues: Antimicrobial peptide 1 (64 aa).

An N-terminal signal peptide occupies residues 1–26 (MAKVSSSLLKFAIVLILVLSMSAIIS). 3 disulfide bridges follow: Cys-29-Cys-46, Cys-36-Cys-50, and Cys-45-Cys-61.

The protein belongs to the AMP family.

The protein localises to the secreted. Possesses antifungal and antibacterial activity. The sequence is that of Antimicrobial peptide 1 from Mesembryanthemum crystallinum (Common ice plant).